We begin with the raw amino-acid sequence, 367 residues long: Uroporphyrinogen decarboxylase (367 aa).

Substrate-binding positions include 28-32, Asp78, Tyr158, Thr213, and His334; that span reads RQAGR.

It belongs to the uroporphyrinogen decarboxylase family. In terms of assembly, homodimer.

It localises to the cytoplasm. The enzyme catalyses uroporphyrinogen III + 4 H(+) = coproporphyrinogen III + 4 CO2. It participates in porphyrin-containing compound metabolism; protoporphyrin-IX biosynthesis; coproporphyrinogen-III from 5-aminolevulinate: step 4/4. In terms of biological role, catalyzes the decarboxylation of four acetate groups of uroporphyrinogen-III to yield coproporphyrinogen-III. The protein is Uroporphyrinogen decarboxylase of Ralstonia pickettii (strain 12J).